The chain runs to 158 residues: Acireductone dioxygenase (158 aa).

Fe(2+) is bound by residues His-81, His-83, Glu-87, and His-126. His-81, His-83, Glu-87, and His-126 together coordinate Ni(2+).

This sequence belongs to the acireductone dioxygenase (ARD) family. Requires Fe(2+) as cofactor. It depends on Ni(2+) as a cofactor.

It is found in the cytoplasm. The protein resides in the nucleus. It catalyses the reaction 1,2-dihydroxy-5-(methylsulfanyl)pent-1-en-3-one + O2 = 4-methylsulfanyl-2-oxobutanoate + formate + 2 H(+). The enzyme catalyses 1,2-dihydroxy-5-(methylsulfanyl)pent-1-en-3-one + O2 = 3-(methylsulfanyl)propanoate + CO + formate + 2 H(+). Its pathway is amino-acid biosynthesis; L-methionine biosynthesis via salvage pathway; L-methionine from S-methyl-5-thio-alpha-D-ribose 1-phosphate: step 5/6. Functionally, catalyzes 2 different reactions between oxygen and the acireductone 1,2-dihydroxy-3-keto-5-methylthiopentene (DHK-MTPene) depending upon the metal bound in the active site. Fe-containing acireductone dioxygenase (Fe-ARD) produces formate and 2-keto-4-methylthiobutyrate (KMTB), the alpha-ketoacid precursor of methionine in the methionine recycle pathway. Ni-containing acireductone dioxygenase (Ni-ARD) produces methylthiopropionate, carbon monoxide and formate, and does not lie on the methionine recycle pathway. In Metarhizium robertsii (strain ARSEF 23 / ATCC MYA-3075) (Metarhizium anisopliae (strain ARSEF 23)), this protein is Acireductone dioxygenase.